A 490-amino-acid chain; its full sequence is Pentatricopeptide repeat-containing protein At2g20710, mitochondrial (490 aa).

The N-terminal 86 residues, 1–86, are a transit peptide targeting the mitochondrion; the sequence is MKHLLLLRLV…IKMLRKFSRF (86 aa). PPR repeat units lie at residues 138–172, 173–207, 208–243, 244–274, 280–310, 314–344, 349–379, and 384–421; these read NYHLYGALLNCYASKKVLHKAEQVFQEMKELGFLK, GCLPYNVMLNLYVRTGKYTMVEKLLREMEDETVKP, DIFTVNTRLHAYSVVSDVEGMEKFLMRCEADQGLHL, DWRTYADTANGYIKAGLTEKALEMLRKSEQM, RKHAYEVLMSFYGAAGKKEEVYRLWSLYKEL, YNTGYISVISALLKMDDIEEVEKIMEEWEAG, DIRIPHLLITGYCKKGMMEKAEEVVNILVQK, and DTSTWERLALGYKMAGKMEKAVEKWKRAIEVSKPGWRP.

Belongs to the PPR family. P subfamily.

It is found in the mitochondrion. In Arabidopsis thaliana (Mouse-ear cress), this protein is Pentatricopeptide repeat-containing protein At2g20710, mitochondrial.